The sequence spans 113 residues: Large ribosomal subunit protein uL18 (113 aa).

This sequence belongs to the universal ribosomal protein uL18 family. In terms of assembly, part of the 50S ribosomal subunit; part of the 5S rRNA/L5/L18/L25 subcomplex. Contacts the 5S and 23S rRNAs.

Its function is as follows. This is one of the proteins that bind and probably mediate the attachment of the 5S RNA into the large ribosomal subunit, where it forms part of the central protuberance. The chain is Large ribosomal subunit protein uL18 from Phocaeicola vulgatus (strain ATCC 8482 / DSM 1447 / JCM 5826 / CCUG 4940 / NBRC 14291 / NCTC 11154) (Bacteroides vulgatus).